Reading from the N-terminus, the 192-residue chain is MSERRNTVVELLGENDVSRTVARIAHQIIEKTALDSEGADRVMLLGIPSGGVPLAERLAAKIEEFSGVRVDTGAIDITLYRDDLRNKPHRALQPTSIPSGGIDKTTVVLVDDVLFSGRTVRAALDALRDLGRPNYIQLAVLVDRGHRQLPIRADYVGKNLPTARAEDVTVMLREIDGRDAVTLTREEGEGDN.

The PRPP-binding motif lies at 107 to 119 (VVLVDDVLFSGRT).

The protein belongs to the purine/pyrimidine phosphoribosyltransferase family. PyrR subfamily.

The enzyme catalyses UMP + diphosphate = 5-phospho-alpha-D-ribose 1-diphosphate + uracil. Functionally, regulates the transcription of the pyrimidine nucleotide (pyr) operon in response to exogenous pyrimidines. In terms of biological role, also displays a weak uracil phosphoribosyltransferase activity which is not physiologically significant. The protein is Bifunctional protein PyrR of Corynebacterium efficiens (strain DSM 44549 / YS-314 / AJ 12310 / JCM 11189 / NBRC 100395).